A 217-amino-acid polypeptide reads, in one-letter code: Probable transaldolase (217 aa).

The active-site Schiff-base intermediate with substrate is K83.

The protein belongs to the transaldolase family. Type 3B subfamily.

It is found in the cytoplasm. The enzyme catalyses D-sedoheptulose 7-phosphate + D-glyceraldehyde 3-phosphate = D-erythrose 4-phosphate + beta-D-fructose 6-phosphate. It functions in the pathway carbohydrate degradation; pentose phosphate pathway; D-glyceraldehyde 3-phosphate and beta-D-fructose 6-phosphate from D-ribose 5-phosphate and D-xylulose 5-phosphate (non-oxidative stage): step 2/3. Its function is as follows. Transaldolase is important for the balance of metabolites in the pentose-phosphate pathway. The sequence is that of Probable transaldolase from Caulobacter sp. (strain K31).